A 342-amino-acid polypeptide reads, in one-letter code: tRNA N6-adenosine threonylcarbamoyltransferase (342 aa).

Residues histidine 111 and histidine 115 each coordinate Fe cation. Residues 134-138 (LVSGG), aspartate 167, glycine 180, and asparagine 277 each bind substrate. Aspartate 305 lines the Fe cation pocket.

The protein belongs to the KAE1 / TsaD family. Requires Fe(2+) as cofactor.

Its subcellular location is the cytoplasm. It carries out the reaction L-threonylcarbamoyladenylate + adenosine(37) in tRNA = N(6)-L-threonylcarbamoyladenosine(37) in tRNA + AMP + H(+). Functionally, required for the formation of a threonylcarbamoyl group on adenosine at position 37 (t(6)A37) in tRNAs that read codons beginning with adenine. Is involved in the transfer of the threonylcarbamoyl moiety of threonylcarbamoyl-AMP (TC-AMP) to the N6 group of A37, together with TsaE and TsaB. TsaD likely plays a direct catalytic role in this reaction. This chain is tRNA N6-adenosine threonylcarbamoyltransferase, found in Cellvibrio japonicus (strain Ueda107) (Pseudomonas fluorescens subsp. cellulosa).